The chain runs to 479 residues: D-hydantoinase/dihydropyrimidinase (479 aa).

Zn(2+) contacts are provided by His59, His61, and Lys150. At Lys150 the chain carries N6-carboxylysine. Position 155 (Tyr155) interacts with substrate. Zn(2+) is bound by residues His183 and His239. A substrate-binding site is contributed by Ser289. Asp316 lines the Zn(2+) pocket. Asn337 is a substrate binding site.

It belongs to the metallo-dependent hydrolases superfamily. Hydantoinase/dihydropyrimidinase family. As to quaternary structure, homotetramer. Zn(2+) serves as cofactor. Post-translationally, carboxylation allows a single lysine to coordinate two zinc ions.

It catalyses the reaction 5,6-dihydrouracil + H2O = 3-(carbamoylamino)propanoate + H(+). Catalyzes the hydrolysis of dihydropyrimidines and of the structurally related DL-5-mono-substituted hydantoins, to produce N-carbamoyl-D-amino acids. This Pseudomonas aeruginosa (strain ATCC 15692 / DSM 22644 / CIP 104116 / JCM 14847 / LMG 12228 / 1C / PRS 101 / PAO1) protein is D-hydantoinase/dihydropyrimidinase (dht).